Consider the following 178-residue polypeptide: Probable chorismate pyruvate-lyase (178 aa).

Substrate contacts are provided by Arg67, Leu105, and Glu164.

It belongs to the UbiC family.

It localises to the cytoplasm. It catalyses the reaction chorismate = 4-hydroxybenzoate + pyruvate. It participates in cofactor biosynthesis; ubiquinone biosynthesis. Removes the pyruvyl group from chorismate, with concomitant aromatization of the ring, to provide 4-hydroxybenzoate (4HB) for the ubiquinone pathway. This is Probable chorismate pyruvate-lyase from Methylobacillus flagellatus (strain ATCC 51484 / DSM 6875 / VKM B-1610 / KT).